The sequence spans 210 residues: Redox-sensing transcriptional repressor Rex (210 aa).

The H-T-H motif DNA-binding region spans 17–56 (KYHRYLYELLKNDVDRISSKELSEKIGFTASQIRQDLNCF). Residue 91–96 (GAGNIG) participates in NAD(+) binding.

This sequence belongs to the transcriptional regulatory Rex family. Homodimer.

The protein localises to the cytoplasm. In terms of biological role, modulates transcription in response to changes in cellular NADH/NAD(+) redox state. In Clostridium botulinum (strain Loch Maree / Type A3), this protein is Redox-sensing transcriptional repressor Rex.